A 259-amino-acid polypeptide reads, in one-letter code: Deoxyribose-phosphate aldolase (259 aa).

The active-site Proton donor/acceptor is the aspartate 102. Lysine 167 functions as the Schiff-base intermediate with acetaldehyde in the catalytic mechanism. Catalysis depends on lysine 201, which acts as the Proton donor/acceptor.

This sequence belongs to the DeoC/FbaB aldolase family. DeoC type 2 subfamily.

The protein resides in the cytoplasm. The enzyme catalyses 2-deoxy-D-ribose 5-phosphate = D-glyceraldehyde 3-phosphate + acetaldehyde. The protein operates within carbohydrate degradation; 2-deoxy-D-ribose 1-phosphate degradation; D-glyceraldehyde 3-phosphate and acetaldehyde from 2-deoxy-alpha-D-ribose 1-phosphate: step 2/2. Catalyzes a reversible aldol reaction between acetaldehyde and D-glyceraldehyde 3-phosphate to generate 2-deoxy-D-ribose 5-phosphate. This chain is Deoxyribose-phosphate aldolase, found in Escherichia coli O45:K1 (strain S88 / ExPEC).